The sequence spans 79 residues: Beta-defensin 130 (79 aa).

Positions 1 to 22 (MKLHSLISVLLLFVTLIPKGKT) are cleaved as a signal peptide. 2 disulfide bridges follow: C38–C53 and C43–C60.

The protein belongs to the beta-defensin family.

It is found in the secreted. Its function is as follows. Antimicrobial host-defense peptide. This Pan troglodytes (Chimpanzee) protein is Beta-defensin 130.